The following is a 61-amino-acid chain: Probradykinin-2 (61 aa).

Positions 1–22 (MSFLKKSLFLVLFLGLVSFSIC) are cleaved as a signal peptide. A propeptide spanning residues 23–50 (EEEKRETEEEENEDEIEEQSEEKKRFEP) is cleaved from the precursor. The segment at 24 to 61 (EEKRETEEEENEDEIEEQSEEKKRFEPVPPGFTPFRQT) is disordered. A compositionally biased stretch (acidic residues) spans 30–42 (EEEENEDEIEEQS). Pro-52 carries the 4-hydroxyproline modification.

This sequence belongs to the frog skin active peptide (FSAP) family. Bradykinin-related peptide subfamily. As to expression, expressed by the skin glands.

The protein resides in the secreted. Its function is as follows. May produce in vitro relaxation of rat arterial smooth muscle and constriction of intestinal smooth muscle. May target bradykinin receptors (BDKRB). The chain is Probradykinin-2 from Pithecopus azureus (Orange-legged monkey tree frog).